Reading from the N-terminus, the 399-residue chain is Elongation factor Tu (399 aa).

The region spanning 10–204 (KPHVNIGTIG…AVDANIPEPE (195 aa)) is the tr-type G domain. Residues 19 to 26 (GHVDHGKT) form a G1 region. 19 to 26 (GHVDHGKT) lines the GTP pocket. Mg(2+) is bound at residue threonine 26. Residues 60–64 (GITIN) form a G2 region. Residues 81 to 84 (DCPG) form a G3 region. Residues 81–85 (DCPGH) and 136–139 (NKCD) contribute to the GTP site. The segment at 136–139 (NKCD) is G4. A G5 region spans residues 174-176 (SGL).

This sequence belongs to the TRAFAC class translation factor GTPase superfamily. Classic translation factor GTPase family. EF-Tu/EF-1A subfamily. In terms of assembly, monomer.

The protein resides in the cytoplasm. The catalysed reaction is GTP + H2O = GDP + phosphate + H(+). GTP hydrolase that promotes the GTP-dependent binding of aminoacyl-tRNA to the A-site of ribosomes during protein biosynthesis. This chain is Elongation factor Tu, found in Synechococcus sp. (strain WH7803).